The following is a 250-amino-acid chain: Electron transfer flavoprotein subunit beta (250 aa).

This sequence belongs to the ETF beta-subunit/FixA family. As to quaternary structure, heterodimer of an alpha and a beta subunit. It depends on FAD as a cofactor. The cofactor is AMP.

It localises to the mitochondrion matrix. Its function is as follows. The electron transfer flavoprotein serves as a specific electron acceptor for several dehydrogenases, including five acyl-CoA dehydrogenases, glutaryl-CoA and sarcosine dehydrogenase. It transfers the electrons to the main mitochondrial respiratory chain via ETF-ubiquinone oxidoreductase (ETF dehydrogenase). This is Electron transfer flavoprotein subunit beta (etfb) from Dictyostelium discoideum (Social amoeba).